We begin with the raw amino-acid sequence, 93 residues long: MPQYASRDVGDPSQIKKNKQSMADLKLRRLTELNNRLREDLERERIPVSQAAKSIITYCNSTRDYMVPSVWGPVPKSEDPYLPQQSSGCCVVM.

The tract at residues 1-22 is disordered; the sequence is MPQYASRDVGDPSQIKKNKQSM. Cysteine 89 carries S-palmitoyl cysteine lipidation. Cysteine 90 carries the post-translational modification Cysteine methyl ester. Cysteine 90 carries the S-farnesyl cysteine lipid modification. A propeptide spans 91 to 93 (removed in mature form); that stretch reads VVM.

Belongs to the G protein gamma family. In terms of assembly, g proteins are composed of 3 units, alpha, beta and gamma.

The protein resides in the membrane. The protein is Guanine nucleotide-binding protein subunit gamma (gng-1) of Neurospora crassa (strain ATCC 24698 / 74-OR23-1A / CBS 708.71 / DSM 1257 / FGSC 987).